The chain runs to 95 residues: Ferredoxin-like protein FixX (95 aa).

This sequence belongs to the bacterial-type ferredoxin family. FixX subfamily.

In terms of biological role, could be part of an electron transfer system required for anaerobic carnitine reduction. Could be a 3Fe-4S cluster-containing protein. This is Ferredoxin-like protein FixX (fixX) from Shigella flexneri.